A 317-amino-acid polypeptide reads, in one-letter code: Porphobilinogen deaminase (317 aa).

C245 bears the S-(dipyrrolylmethanemethyl)cysteine mark.

The protein belongs to the HMBS family. Monomer. Requires dipyrromethane as cofactor.

It catalyses the reaction 4 porphobilinogen + H2O = hydroxymethylbilane + 4 NH4(+). Its pathway is porphyrin-containing compound metabolism; protoporphyrin-IX biosynthesis; coproporphyrinogen-III from 5-aminolevulinate: step 2/4. The protein operates within porphyrin-containing compound metabolism; chlorophyll biosynthesis. Tetrapolymerization of the monopyrrole PBG into the hydroxymethylbilane pre-uroporphyrinogen in several discrete steps. This is Porphobilinogen deaminase from Parasynechococcus marenigrum (strain WH8102).